We begin with the raw amino-acid sequence, 539 residues long: MAAKMILFDEEARRALERGVNKLADTVKVTLGPKGRNVVLEKKFGSPQIVNDGVTIAKEIELEDPFENMGAQIVREVASKTNDIAGDGTTTATVLAQAMIREGLKNIAAGANPMILRRGIQKAVDVVVDEIKKMSKKVRGKEDITYVASISAGDEEIGKLVADAMEKVTNDGVITVEESKTTETTLEIVEGMQFDRGYISAYMVTDTERMEAVLDDPYILITDKKISTIQDILPLLEQIVQQGKKLLIIAEDVEGEALATLVVNKLRGTLQCVAVKAPGFGDRRKAMLQDIAILTGGQVISEELGLDLREVKISQLGRARQVKVQKENTIIVDGAGDPSEIKARIQSIKKQIEETTSDFDREKLQERLAKLAGGVAVIHVGAATETEMKEKKLRIEDALAATKAAVEEGIVPGGGTAFINAIPALDKLIETLTGDEKTGAMIVKKALEEPLRQIAENAGLDGSVIVNKVKESPAGIGFDALNERFVDMFEAGIVDPTKVTRTAIQNAASAAAMLLTTEAVVAEKPEKEKNPPAPAPDMY.

Residues 30-33, 87-91, glycine 414, 479-481, and aspartate 495 contribute to the ATP site; these read TLGP, DGTTT, and DAL.

Belongs to the chaperonin (HSP60) family. As to quaternary structure, forms a cylinder of 14 subunits composed of two heptameric rings stacked back-to-back. Interacts with the co-chaperonin GroES.

The protein localises to the cytoplasm. It catalyses the reaction ATP + H2O + a folded polypeptide = ADP + phosphate + an unfolded polypeptide.. Functionally, together with its co-chaperonin GroES, plays an essential role in assisting protein folding. The GroEL-GroES system forms a nano-cage that allows encapsulation of the non-native substrate proteins and provides a physical environment optimized to promote and accelerate protein folding. In Caldicellulosiruptor saccharolyticus (strain ATCC 43494 / DSM 8903 / Tp8T 6331), this protein is Chaperonin GroEL.